A 159-amino-acid polypeptide reads, in one-letter code: NAD(P)H-quinone oxidoreductase subunit J, chloroplastic (159 aa).

This sequence belongs to the complex I 30 kDa subunit family. As to quaternary structure, NDH is composed of at least 16 different subunits, 5 of which are encoded in the nucleus.

It is found in the plastid. The protein resides in the chloroplast thylakoid membrane. It catalyses the reaction a plastoquinone + NADH + (n+1) H(+)(in) = a plastoquinol + NAD(+) + n H(+)(out). The enzyme catalyses a plastoquinone + NADPH + (n+1) H(+)(in) = a plastoquinol + NADP(+) + n H(+)(out). In terms of biological role, NDH shuttles electrons from NAD(P)H:plastoquinone, via FMN and iron-sulfur (Fe-S) centers, to quinones in the photosynthetic chain and possibly in a chloroplast respiratory chain. The immediate electron acceptor for the enzyme in this species is believed to be plastoquinone. Couples the redox reaction to proton translocation, and thus conserves the redox energy in a proton gradient. The protein is NAD(P)H-quinone oxidoreductase subunit J, chloroplastic of Triticum aestivum (Wheat).